Here is a 292-residue protein sequence, read N- to C-terminus: Zinc metalloproteinase nas-3 (292 aa).

The N-terminal stretch at 1–16 is a signal peptide; that stretch reads MYRFIIFFSLLALTAS. In terms of domain architecture, Peptidase M12A spans 56–249; sequence RGIAIHPWQW…RNINTLYKCN (194 aa). 2 disulfides stabilise this stretch: Cys103–Cys248 and Cys128–Cys158. Residue His169 participates in Zn(2+) binding. Residue Glu170 is part of the active site. 2 residues coordinate Zn(2+): His173 and His179.

Zn(2+) is required as a cofactor.

It is found in the secreted. In terms of biological role, metalloprotease. This chain is Zinc metalloproteinase nas-3 (nas-3), found in Caenorhabditis elegans.